Consider the following 131-residue polypeptide: MSSEQLHEPAELLSEETKNMHRALVTLIEELEAVDWYQQRADACSEPGLHDVLIHNKNEEVEHAMMTLEWIRRRSPVFDAHMRTYLFTERPILELEEEDTGSSSSVAASPTSAPSHGSLGIGSLRQEGKED.

Residues E30, E60, and H63 each contribute to the Fe cation site. Residues 96–131 form a disordered region; sequence EEEDTGSSSSVAASPTSAPSHGSLGIGSLRQEGKED. Residues 98-131 form a targeting peptide region; that stretch reads EDTGSSSSVAASPTSAPSHGSLGIGSLRQEGKED. Residues 102-115 are compositionally biased toward low complexity; that stretch reads SSSSVAASPTSAPS.

The protein belongs to the ferritin-like superfamily. EncFtn family. As to quaternary structure, forms dimers at all pH tested; under acidic conditions formes decamers. The N-terminal domain (residues 1-97) crystallizes as a decameric ring. Four decamers are loaded in the encapsulin nanocompartment in a tetrahedral arrangement. A 3 nm gap is consistently seen between the shell and the cargo. The target peptide extends away from the decameric ring, to allow binding to the interior of the encapsulin nanocompartment shell.

It is found in the encapsulin nanocompartment. It catalyses the reaction 4 Fe(2+) + O2 + 4 H(+) = 4 Fe(3+) + 2 H2O. Its activity is regulated as follows. The ferroxidase activity is inhibited by zinc. Its function is as follows. Cargo protein of a type 1 encapsulin nanocompartment. A ferritin-like ferroxidase that converts Fe(2+) to Fe(3+) iron inside the encapsulin nanocompartment. Mineralized Fe(3+) is released to the exterior of the decameric complex for deposition in the encapsulin nanocompartment. In solution the decamer binds 10-15 iron cations; in the encapsulin nanocompartment the decamer can bind up to 48 ions, perhaps via its internal channel, and on its exterior. The cargo-loaded nanocompartment maximally sequesters up to 4150 Fe ions. This is Encapsulated ferritin-like protein from Haliangium ochraceum (strain DSM 14365 / JCM 11303 / SMP-2).